The sequence spans 41 residues: Replication-associated protein (41 aa).

In terms of biological role, involved in viral RNA replication. The protein is Replication-associated protein of Potato leafroll virus (strain Potato/Scotland/strain 1/1984) (PLrV).